The following is a 237-amino-acid chain: Flagellar brake protein YcgR (237 aa).

The PilZ domain occupies 108-225 (QRRRQFRVTT…MERKIQSAVF (118 aa)).

This sequence belongs to the YcgR family. Monomer. Interacts with the flagellar basal bodies.

It is found in the bacterial flagellum basal body. In terms of biological role, acts as a flagellar brake, regulating swimming and swarming in a bis-(3'-5') cyclic diguanylic acid (c-di-GMP)-dependent manner. Binds 1 c-di-GMP dimer per subunit. Increasing levels of c-di-GMP lead to decreased motility. This is Flagellar brake protein YcgR from Serratia proteamaculans (strain 568).